An 842-amino-acid chain; its full sequence is ATP-binding cassette sub-family B member 6 (842 aa).

Over 1–26 (MVTVGNYCEAEGPVGPAWMQDGLSPC) the chain is Lumenal. Residues 1–205 (MVTVGNYCEA…SGGLFVLGLW (205 aa)) are required for the lysosomal targeting. Residues 1-236 (MVTVGNYCEA…RSQVRSAAQQ (236 aa)) are required for ATPase activity. N-linked (GlcNAc...) asparagine glycosylation occurs at asparagine 6. A disulfide bridge links cysteine 8 with cysteine 26. The chain crosses the membrane as a helical span at residues 27–47 (FFFTLVPSTRMALGTLALVLA). Residues 48–72 (LPCRRRERPAGADSLSWGAGPRISP) are Cytoplasmic-facing. A helical transmembrane segment spans residues 73–93 (YVLQLLLATLQAALPLAGLAG). Topologically, residues 94–106 (RVGTARGAPLPSY) are lumenal. Residues 107 to 127 (LLLASVLESLAGACGLWLLVV) form a helical membrane-spanning segment. Over 128–147 (ERSQARQRLAMGIWIKFRHS) the chain is Cytoplasmic. A helical membrane pass occupies residues 148 to 168 (PGLLLLWTVAFAAENLALVSW). The Lumenal portion of the chain corresponds to 169 to 185 (NSPQWWWARADLGQQVQ). Residues 186–206 (FSLWVLRYVVSGGLFVLGLWA) traverse the membrane as a helical segment. The Cytoplasmic portion of the chain corresponds to 207–263 (PGLRPQSYTLQVHEEDQDVERSQVRSAAQQSTWRDFGRKLRLLSGYLWPRGSPALQL). A helical transmembrane segment spans residues 264–284 (VVLICLGLMGLERALNVLVPI). An ABC transmembrane type-1 domain is found at 265–556 (VLICLGLMGL…FGTYYRMIQT (292 aa)). Residues 285–291 (FYRNIVN) are Lumenal-facing. A helical transmembrane segment spans residues 292-312 (LLTEKAPWNSLAWTVTSYVFL). Residues 313–375 (KFLQGGGTGS…TGEVLRIADR (63 aa)) are Cytoplasmic-facing. Residues 376–396 (GTSSVTGLLSYLVFNVIPTLA) form a helical membrane-spanning segment. Residue aspartate 397 is a topological domain, lumenal. A helical transmembrane segment spans residues 398–418 (IIIGIIYFSMFFNAWFGLIVF). At 419-499 (LCMSLYLTLT…SSASLVLLNQ (81 aa)) the chain is on the cytoplasmic side. The helical transmembrane segment at 500-520 (TQNLVIGLGLLAGSLLCAYFV) threads the bilayer. Over 521–529 (TEQKLQVGD) the chain is Lumenal. The helical transmembrane segment at 530 to 550 (YVLFGTYIIQLYMPLNWFGTY) threads the bilayer. At 551-842 (YRMIQTNFID…EDTKPQTMER (292 aa)) the chain is on the cytoplasmic side. The 235-residue stretch at 590 to 824 (IEFENVHFSY…GGVYADMWQL (235 aa)) folds into the ABC transporter domain. ATP contacts are provided by residues tyrosine 599 and 623–634 (GPSGAGKSTILR).

The protein belongs to the ABC transporter superfamily. ABCB family. Heavy Metal importer (TC 3.A.1.210) subfamily. Homodimer. N-glycosylated. Widely expressed. High expression is detected in the retinal epithelium. Expressed in mature erythrocytes.

The protein resides in the cell membrane. Its subcellular location is the mitochondrion outer membrane. The protein localises to the endoplasmic reticulum membrane. It is found in the golgi apparatus membrane. It localises to the endosome membrane. The protein resides in the lysosome membrane. Its subcellular location is the late endosome membrane. The protein localises to the early endosome membrane. It is found in the secreted. It localises to the extracellular exosome. The protein resides in the mitochondrion. Its subcellular location is the endosome. The protein localises to the multivesicular body membrane. It is found in the melanosome membrane. The catalysed reaction is heme b(in) + ATP + H2O = heme b(out) + ADP + phosphate + H(+). The enzyme catalyses coproporphyrin III(in) + ATP + H2O = coproporphyrin III(out) + ADP + phosphate + H(+). It catalyses the reaction pheophorbide a(in) + ATP + H2O = pheophorbide a(out) + ADP + phosphate + H(+). It carries out the reaction coproporphyrinogen III(in) + ATP + H2O = coproporphyrinogen III(out) + ADP + phosphate + H(+). The catalysed reaction is protoporphyrin IX(in) + ATP + H2O = protoporphyrin IX(out) + ADP + phosphate + H(+). The enzyme catalyses coproporphyrin I(in) + ATP + H2O = coproporphyrin I(out) + ADP + phosphate + H(+). It catalyses the reaction uroporphyrin I(in) + ATP + H2O = uroporphyrin I(out) + ADP + phosphate + H(+). It carries out the reaction uroporphyrin III(in) + ATP + H2O = uroporphyrin III(out) + ADP + phosphate + H(+). With respect to regulation, ATPase activity is inhibited by MgATP with an IC(50) of 1.03 mM and up-regulated by coporphyrin III&gt; hemin &gt; protoporphyrin IX. ATPase activity for hemin is up-regulated by glutathione. The ATPase activity is impaired by increasing copper concentrations (0-300 uM). The ATPase activity is stimulated in presence of glutathione for increasing copper concentrations (0-300 uM). ATP-dependent transporter that catalyzes the transport of a broad-spectrum of porphyrins from the cytoplasm to the extracellular space through the plasma membrane or into the vesicle lumen. May also function as an ATP-dependent importer of porphyrins from the cytoplasm into the mitochondria, in turn may participate in the de novo heme biosynthesis regulation and in the coordination of heme and iron homeostasis during phenylhydrazine stress. May also play a key role in the early steps of melanogenesis producing PMEL amyloid fibrils. In vitro, it confers to cells a resistance to toxic metal such as arsenic and cadmium and against chemotherapeutics agent such as 5-fluorouracil, SN-38 and vincristin. In addition may play a role in the transition metal homeostasis. The protein is ATP-binding cassette sub-family B member 6 of Homo sapiens (Human).